A 331-amino-acid chain; its full sequence is MATPHHSRRGSMAYYPRVRAKSVDPKIRSWPEIKGEVKVQGFAGFKVGMTHVEMIDYRKKSVTAGQPILVPVTVVEVPPLDVVGYRLYDEDAEGNLVVVFEAWAKDLDKEIFRKIPEIKKVAERDPPESYEDVRIIVATRNKDVPGIPSKKPEIFELRIGGGNSVKERLEYAKNHLGKQITFTDFSKPGKFVDVVSITKGKGFTGHVKRFGVKLLPRKNRKHRRMIGTLGPWHPDWVRNTVPQAGQMGFQQRTISNVRVIKYGNKEEVDSINVRGGFLHYGFVKNDYVLLFGSIPGASKRLIKMRDPARQKVPDIEEVKLEYISLESKQGD.

The protein belongs to the universal ribosomal protein uL3 family. As to quaternary structure, part of the 50S ribosomal subunit. Forms a cluster with proteins L14 and L24e.

One of the primary rRNA binding proteins, it binds directly near the 3'-end of the 23S rRNA, where it nucleates assembly of the 50S subunit. The protein is Large ribosomal subunit protein uL3 of Thermoplasma acidophilum (strain ATCC 25905 / DSM 1728 / JCM 9062 / NBRC 15155 / AMRC-C165).